Here is a 152-residue protein sequence, read N- to C-terminus: MSSGGLLLLLGFLTLWAELTPVSGQDPPRFCSLPAETGECRGRIPRFYYNSASKQCEQFFYSGCGGNANNFETKDQCHYTCVEKPGVCPPRPQQQGQEGKNCENDWKCPGQQKCCRYRGKTECKDAVFEKFASTTRTPTSIGSTPVGSSVPT.

A signal peptide spans 1–24; that stretch reads MSSGGLLLLLGFLTLWAELTPVSG. Q25 carries the post-translational modification Pyrrolidone carboxylic acid. In terms of domain architecture, BPTI/Kunitz inhibitor spans 31 to 81; the sequence is CSLPAETGECRGRIPRFYYNSASKQCEQFFYSGCGGNANNFETKDQCHYTC. Disulfide bonds link C31/C81, C40/C64, C56/C77, C88/C115, C102/C114, and C108/C123. Residues 81-127 enclose the WAP; atypical domain; that stretch reads CVEKPGVCPPRPQQQGQEGKNCENDWKCPGQQKCCRYRGKTECKDAV.

The protein belongs to the venom Kunitz-type family. Expressed by the venom gland.

The protein resides in the secreted. This is Fused toxin protein from Sistrurus catenatus edwardsii (Desert massasauga).